The chain runs to 53 residues: Conotoxin Cal22e (53 aa).

Positions 1-5 (GRPSA) are excised as a propeptide.

Contains 4 disulfide bonds. As to expression, expressed by the venom duct.

The protein resides in the secreted. Probable neurotoxin with unknown target. Possibly targets ion channels. This chain is Conotoxin Cal22e, found in Californiconus californicus (California cone).